Here is a 106-residue protein sequence, read N- to C-terminus: Protein yippee-like At4g27745 (106 aa).

Residues Arg8–Asp105 enclose the Yippee domain. Zn(2+)-binding residues include Cys12, Cys15, Cys68, and Cys71.

It belongs to the yippee family.

This chain is Protein yippee-like At4g27745, found in Arabidopsis thaliana (Mouse-ear cress).